The following is a 350-amino-acid chain: Probable deoxyhypusine synthase (350 aa).

Residues 96–100 (SNLIS), 122–124 (TAG), Glu-128, and Asp-229 each bind NAD(+). 127 to 128 (EE) provides a ligand contact to spermidine. Spermidine is bound at residue Asp-234. Position 276 (Gly-276) interacts with NAD(+). His-281 is a spermidine binding site. NAD(+) is bound at residue 301–302 (SA). Residues 307–309 (GSD) and 316–322 (EAVSWGK) each bind spermidine. Lys-322 functions as the Nucleophile in the catalytic mechanism. 335-336 (EV) lines the NAD(+) pocket.

The protein belongs to the deoxyhypusine synthase family. Requires NAD(+) as cofactor.

It catalyses the reaction [eIF5A protein]-L-lysine + spermidine = [eIF5A protein]-deoxyhypusine + propane-1,3-diamine. It functions in the pathway protein modification; eIF5A hypusination. Functionally, catalyzes the NAD-dependent oxidative cleavage of spermidine and the subsequent transfer of the butylamine moiety of spermidine to the epsilon-amino group of a specific lysine residue of the eIF-5A precursor protein to form the intermediate deoxyhypusine residue. This chain is Probable deoxyhypusine synthase, found in Schizosaccharomyces pombe (strain 972 / ATCC 24843) (Fission yeast).